Reading from the N-terminus, the 67-residue chain is Large ribosomal subunit protein uL29 (67 aa).

This sequence belongs to the universal ribosomal protein uL29 family.

This Pelotomaculum thermopropionicum (strain DSM 13744 / JCM 10971 / SI) protein is Large ribosomal subunit protein uL29.